Reading from the N-terminus, the 140-residue chain is Large ribosomal subunit protein uL3 (140 aa).

The protein belongs to the universal ribosomal protein uL3 family. Part of the 50S ribosomal subunit. Forms a cluster with proteins L14 and L19.

Its function is as follows. One of the primary rRNA binding proteins, it binds directly near the 3'-end of the 23S rRNA, where it nucleates assembly of the 50S subunit. This Planobispora rosea protein is Large ribosomal subunit protein uL3 (rplC).